A 241-amino-acid chain; its full sequence is Sensory transduction protein LytT (241 aa).

A Response regulatory domain is found at arginine 3–lysine 117. Residue aspartate 54 is modified to 4-aspartylphosphate. Residues leucine 137–isoleucine 241 form the HTH LytTR-type domain.

Post-translationally, phosphorylated by LytS.

The protein resides in the cytoplasm. Functionally, member of the two-component regulatory system LytS/LytT that probably regulates genes involved in cell wall metabolism. This is Sensory transduction protein LytT (lytT) from Bacillus subtilis (strain 168).